A 218-amino-acid chain; its full sequence is Probable 2-aminoethanethiol dioxygenase (218 aa).

The cofactor is Fe cation.

It carries out the reaction cysteamine + O2 = hypotaurine + H(+). The protein is Probable 2-aminoethanethiol dioxygenase (ado-1) of Dictyostelium discoideum (Social amoeba).